The following is a 917-amino-acid chain: Alanine--tRNA ligase (917 aa).

His-592, His-596, Cys-694, and His-698 together coordinate Zn(2+).

This sequence belongs to the class-II aminoacyl-tRNA synthetase family. Requires Zn(2+) as cofactor.

It is found in the cytoplasm. It carries out the reaction tRNA(Ala) + L-alanine + ATP = L-alanyl-tRNA(Ala) + AMP + diphosphate. Catalyzes the attachment of alanine to tRNA(Ala) in a two-step reaction: alanine is first activated by ATP to form Ala-AMP and then transferred to the acceptor end of tRNA(Ala). Also edits incorrectly charged Ser-tRNA(Ala) and Gly-tRNA(Ala) via its editing domain. This is Alanine--tRNA ligase from Sorangium cellulosum (strain So ce56) (Polyangium cellulosum (strain So ce56)).